The primary structure comprises 438 residues: Battenin (438 aa).

The disordered stretch occupies residues 1-27 (MGSSAGSWRRLEDSEREETDSEPQAPR). At 1–37 (MGSSAGSWRRLEDSEREETDSEPQAPRLDSRSVLWKN) the chain is on the cytoplasmic side. Ser14 is subject to Phosphoserine. Residues 38–58 (AVGFWILGLCNNFSYVVMLSA) traverse the membrane as a helical segment. The Lumenal segment spans residues 59–127 (AHDILKQEQA…GLHLLPYSPR (69 aa)). A disordered region spans residues 67-87 (QASGNQSHVEPGPTPTPHNSS). Residues Asn71 and Asn85 are each glycosylated (N-linked (GlcNAc...) asparagine). A helical transmembrane segment spans residues 128-148 (VLVSGVCSAGSFVLVAFSQSV). Residues 149–151 (GLS) are Cytoplasmic-facing. A helical transmembrane segment spans residues 152-172 (LCGVVLASISSGLGEVTFLSL). Residues 173-182 (TAFYPSAVIS) lie on the Lumenal side of the membrane. The chain crosses the membrane as a helical span at residues 183-203 (WWSSGTGGAGLLGSLSYLGLT). At 204–277 (QAGLSPQHTL…DLSLQERWTV (74 aa)) the chain is on the cytoplasmic side. Residues 239 to 261 (PGGENEAETAARQPLIGTETPES) form a disordered region. The Lysosomal targeting motif motif lies at 242 to 244 (ENE). The Lysosomal targeting motif. Required for AP1G1, AP2A2 and AP3D1 interaction motif lies at 253–254 (LI). A helical transmembrane segment spans residues 278 to 298 (FKGLLWYIIPLVLVYFAEYFI). Over 299-346 (NQGLFELLFFRNTSLSHAQQYRWYQMLYQAGVFASRSSLQCCRIRFTW) the chain is Lumenal. Asn310 carries an N-linked (GlcNAc...) asparagine glycan. The helical transmembrane segment at 347–367 (VLALLQCLNLALLLADVCLNF) threads the bilayer. At 368-438 (LPSIYLIFII…PLHDFLCHLP (71 aa)) the chain is on the cytoplasmic side. The short motif at 409-419 (MEAACISDTLG) is the Lysosomal targeting motif element. A Cysteine methyl ester modification is found at Cys435. Residue Cys435 is the site of S-farnesyl cysteine attachment. A propeptide spans 436 to 438 (HLP) (removed in mature form).

Belongs to the battenin family. In terms of assembly, homooligomer. Interacts with DCTN1, KIF3A, RAB7A and RILP. Interacts with CLN5. Interacts with KCNIP3. Post-translationally, highly glycosylated. In terms of processing, farnesylation is important for trafficking to lysosomes. As to expression, expressed throughout the brain, such as, in the cerebral cortex, hippocampus, cerebellum and several different cerebral nuclei (at protein level). In the cerebral cortex, expressed in all cortical layers. In the hippocampus, expressed in the granule cells in the dentate gyrus and the pyramidal cells of the hippocampus proper. In the cerebellum expressed in the granular and molecular layers, and in the Purkinje cell layer.

It is found in the lysosome membrane. It localises to the late endosome. The protein localises to the lysosome. The protein resides in the membrane raft. Its subcellular location is the golgi apparatus. It is found in the trans-Golgi network. It localises to the synapse. The protein localises to the synaptosome. The protein resides in the early endosome membrane. Its subcellular location is the late endosome membrane. It is found in the cytoplasmic vesicle. It localises to the autophagosome. Mediates microtubule-dependent, anterograde transport connecting the Golgi network, endosomes, autophagosomes, lysosomes and plasma membrane, and participates in several cellular processes such as regulation of lysosomal pH, lysosome protein degradation, receptor-mediated endocytosis, autophagy, transport of proteins and lipids from the TGN, apoptosis and synaptic transmission. Facilitates the proteins transport from trans-Golgi network (TGN)-to other membrane compartments such as transport of microdomain-associated proteins to the plasma membrane, IGF2R transport to the lysosome where it regulates the CTSD release leading to regulation of CTSD maturation and thereby APP intracellular processing. Moreover regulates CTSD activity in response to osmotic stress. Also binds galactosylceramide and transports it from the trans Golgi to the rafts, which may have immediate and downstream effects on cell survival by modulating ceramide synthesis. At the plasma membrane, regulates actin-dependent events including filopodia formation, cell migration, and pinocytosis through ARF1-CDC42 pathway and also the cytoskeleton organization through interaction with MYH10 and fodrin leading to the regulation of the plasma membrane association of Na+, K+ ATPase complex. Regulates synaptic transmission in the amygdala, hippocampus, and cerebellum through regulation of synaptic vesicles density and their proximity to active zones leading to modulation of short-term plasticity and age-dependent anxious behavior, learning and memory. Regulates autophagic vacuoles (AVs) maturation by modulating the trafficking between endocytic and autophagolysosomal/lysosomal compartments, which involves vesicle fusion leading to regulation of degradation process. Also participates in cellular homeostasis of compounds such as, water, ions, amino acids, proteins and lipids in several tissue namely in brain and kidney through regulation of their transport and synthesis. In Mus musculus (Mouse), this protein is Battenin.